The following is a 37-amino-acid chain: uncharacterized protein (37 aa).

The chain crosses the membrane as a helical span at residues 16–36 (FALIVVLFILLIIVGTAFVGG).

This sequence belongs to the SscA family.

It is found in the membrane. This is an uncharacterized protein from Bacillus subtilis (strain 168).